The sequence spans 146 residues: Putative pre-16S rRNA nuclease (146 aa).

It belongs to the YqgF nuclease family.

It is found in the cytoplasm. In terms of biological role, could be a nuclease involved in processing of the 5'-end of pre-16S rRNA. This is Putative pre-16S rRNA nuclease from Paraburkholderia xenovorans (strain LB400).